The sequence spans 889 residues: MQNHGFNDGSYGGRRLPAAGTDEYHADQYYDDRAGHNLGPYSNSSQGQLYTADYSSERLYMQPPQSITQSPSPGPYYNHQQDHVVNPQQIHDRGEYFDGYNQGHPPQEHQAYDDDGQPLIEDQHGYSDNPQHQTQTPAGGIKRWKTVKQVLLYRGNLVLDCPVPPILLNQNPHSKERDEFTHMRYSAATCDPSDFYNENFTLRQKLFSSPRHTELFIVVTMYNEDDILFARTMIGVFKNIEYMCNRPNSKTWGKDAWKKIVVCVVSDGRAKINPRTKAILSGMGVYQEGIAKQQVNNKDVTAHIYEYSTHTHLQLKNGVVSLVHNRQPVQMLFCLKEKNQKKINSHRWFFQAFGRVLDPNICVLIDAGTRPGGNSIYHLWKAFDLEPMCGGACGEIKAMLGTGGKNLINPLVATQNFEYKMSNILDKPLESAFGFISVLPGAFSAYRYVALQNDKNGKGPLEKYFLGETLHGGSSAGLFESNMYLAEDRILCFELVTKRNCHWILQYVKSATGETDVPDTVTELVLQRRRWLNGSFFAAIYAIAHFYEFFRSDHSFFRKLAFFVEFVFNTINMIFAWFAIGNFFLVFKILTTSLGSADLLGRTGEILGVVFTWLYGVFLMTCFVLSMGNRPAGSGRLYTAMVWFWAIIMIYLMFAAIFIAVKAIIKDVNSGTAFSISQLFKNPVFYTLIISVMSTFGIWLIASIIMFDPWHMLTSFIQYMLLTPTYTNVLNVYAFCNTHDVSWGTKGDDKVEKLPSVNTKDGQGKTDLPDEGDLNAQYQREIEKFSTKFKEVKTPPTAAQLQEKQMDYYRGVRTGVVLIWMITNFALAALVLSSAGLERITPGNGNSQQEATDRSNIYMTIVLWSVAVLSGFKFLGAMWFLVVRMFRGV.

Asparagine 43 carries N-linked (GlcNAc...) asparagine glycosylation. The segment at 94-138 is disordered; sequence GEYFDGYNQGHPPQEHQAYDDDGQPLIEDQHGYSDNPQHQTQTPA. Residues 126 to 137 show a composition bias toward polar residues; the sequence is YSDNPQHQTQTP. An N-linked (GlcNAc...) asparagine glycan is attached at asparagine 199. 9 helical membrane passes run 431 to 451, 530 to 550, 560 to 580, 606 to 626, 641 to 661, 687 to 707, 716 to 736, 815 to 835, and 861 to 881; these read SAFGFISVLPGAFSAYRYVAL, RWLNGSFFAAIYAIAHFYEFF, LAFFVEFVFNTINMIFAWFAI, ILGVVFTWLYGVFLMTCFVLS, MVWFWAIIMIYLMFAAIFIAV, TLIISVMSTFGIWLIASIIMF, FIQYMLLTPTYTNVLNVYAFC, GVVLIWMITNFALAALVLSSA, and IVLWSVAVLSGFKFLGAMWFL.

The protein belongs to the chitin synthase family. Class I subfamily. Expressed in hyphal bodies.

The protein resides in the cell membrane. It carries out the reaction [(1-&gt;4)-N-acetyl-beta-D-glucosaminyl](n) + UDP-N-acetyl-alpha-D-glucosamine = [(1-&gt;4)-N-acetyl-beta-D-glucosaminyl](n+1) + UDP + H(+). Functionally, polymerizes chitin, a structural polymer of the cell wall and septum, by transferring the sugar moiety of UDP-GlcNAc to the non-reducing end of the growing chitin polymer. Contributes to the production of conidia and the ability of fungal conidia to germinate. Not involved in fungal stress tolerances. This chain is Chitin synthase I, found in Metarhizium acridum (strain CQMa 102).